Reading from the N-terminus, the 480-residue chain is MTLSFTARWRDELPATYTALLPTPLKNARLIWYNDELAQQLAIPASLFDATNGAGVWGGETLLPGMSPVAQVYSGHQFGIWAGQLGDGRGILLGEQLLADGSTLDWHLKGAGLTPYSRMGDGRAVLRSTIRESLASEAMHYLGIPTTRALSIVASDTPVQRETQETGAMLMRLAQSHMRFGHFEHFYYRREPEKVQQLADFAIRHYWPQWQDVAEKYALWFEEVAARTGRLIAEWQTVGFSHGVMNTDNMSILGLTIDYGPFGFLDDYDPGFIGNHSDHQGRYRFDNQPSVALWNLQRLAQTLTPFIEIDALNRALDRYQDALLTHYGQRMRQKLGFFTEQKDDNALLNELFSLMAREGSDYTRTFRMLSHTEQQSASSPLRDTFIDRAAFDAWFDRYRARLRTEAVDDALRQQQMQRVNPAIVLRNWLAQRAIDAAEQGDMAELHRLHEVLRQPFTDRDDDYASRPPEWGKRLEVSCSS.

Positions 86, 88, 89, 109, 121, 122, 172, and 179 each coordinate ATP. The active-site Proton acceptor is the Asp-248. Positions 249 and 258 each coordinate Mg(2+). ATP is bound at residue Asp-258.

This sequence belongs to the SELO family. Mg(2+) is required as a cofactor. Mn(2+) serves as cofactor.

The enzyme catalyses L-seryl-[protein] + ATP = 3-O-(5'-adenylyl)-L-seryl-[protein] + diphosphate. The catalysed reaction is L-threonyl-[protein] + ATP = 3-O-(5'-adenylyl)-L-threonyl-[protein] + diphosphate. It carries out the reaction L-tyrosyl-[protein] + ATP = O-(5'-adenylyl)-L-tyrosyl-[protein] + diphosphate. It catalyses the reaction L-histidyl-[protein] + UTP = N(tele)-(5'-uridylyl)-L-histidyl-[protein] + diphosphate. The enzyme catalyses L-seryl-[protein] + UTP = O-(5'-uridylyl)-L-seryl-[protein] + diphosphate. The catalysed reaction is L-tyrosyl-[protein] + UTP = O-(5'-uridylyl)-L-tyrosyl-[protein] + diphosphate. Nucleotidyltransferase involved in the post-translational modification of proteins. It can catalyze the addition of adenosine monophosphate (AMP) or uridine monophosphate (UMP) to a protein, resulting in modifications known as AMPylation and UMPylation. The protein is Protein nucleotidyltransferase YdiU of Salmonella typhi.